The chain runs to 284 residues: Cell division protein ZipA (284 aa).

Position 1 (Met-1) is a topological domain, periplasmic. The helical transmembrane segment at Glu-2–Phe-22 threads the bilayer. The Cytoplasmic segment spans residues Asp-23–Arg-284. Residues Pro-47–Pro-140 form a disordered region. Basic and acidic residues-rich tracts occupy residues Leu-62–Leu-75, Arg-83–Gln-102, and Ser-119–Pro-140.

Belongs to the ZipA family. As to quaternary structure, interacts with FtsZ via their C-terminal domains.

The protein localises to the cell inner membrane. Its function is as follows. Essential cell division protein that stabilizes the FtsZ protofilaments by cross-linking them and that serves as a cytoplasmic membrane anchor for the Z ring. Also required for the recruitment to the septal ring of downstream cell division proteins. The sequence is that of Cell division protein ZipA from Pseudomonas fluorescens (strain ATCC BAA-477 / NRRL B-23932 / Pf-5).